A 238-amino-acid chain; its full sequence is ATP synthase subunit a (238 aa).

A run of 5 helical transmembrane segments spans residues 18–38, 76–96, 114–134, 166–186, and 193–213; these read LTLLAVCIVTIAIVFAFVFWA, YSLLLFTIFLFVAVANNLGLF, NLAFDLALSLFITLMVHIEGV, SLAIRLFGNIFAGEVVTGLIV, and VYWWPIAFLVNMAWTAFSVFI.

Belongs to the ATPase A chain family. In terms of assembly, F-type ATPases have 2 components, CF(1) - the catalytic core - and CF(0) - the membrane proton channel. CF(1) has five subunits: alpha(3), beta(3), gamma(1), delta(1), epsilon(1). CF(0) has three main subunits: a(1), b(2) and c(9-12). The alpha and beta chains form an alternating ring which encloses part of the gamma chain. CF(1) is attached to CF(0) by a central stalk formed by the gamma and epsilon chains, while a peripheral stalk is formed by the delta and b chains.

It localises to the cell membrane. Functionally, key component of the proton channel; it plays a direct role in the translocation of protons across the membrane. This is ATP synthase subunit a from Streptococcus pyogenes serotype M1.